The chain runs to 286 residues: UDP-3-O-acyl-N-acetylglucosamine deacetylase (286 aa).

The Zn(2+) site is built by histidine 79, histidine 237, and aspartate 241. Histidine 264 functions as the Proton donor in the catalytic mechanism.

This sequence belongs to the LpxC family. It depends on Zn(2+) as a cofactor.

The enzyme catalyses a UDP-3-O-[(3R)-3-hydroxyacyl]-N-acetyl-alpha-D-glucosamine + H2O = a UDP-3-O-[(3R)-3-hydroxyacyl]-alpha-D-glucosamine + acetate. The protein operates within glycolipid biosynthesis; lipid IV(A) biosynthesis; lipid IV(A) from (3R)-3-hydroxytetradecanoyl-[acyl-carrier-protein] and UDP-N-acetyl-alpha-D-glucosamine: step 2/6. In terms of biological role, catalyzes the hydrolysis of UDP-3-O-myristoyl-N-acetylglucosamine to form UDP-3-O-myristoylglucosamine and acetate, the committed step in lipid A biosynthesis. In Chlamydia muridarum (strain MoPn / Nigg), this protein is UDP-3-O-acyl-N-acetylglucosamine deacetylase.